The sequence spans 213 residues: tRNA (guanine-N(7)-)-methyltransferase (213 aa).

Glu44, Asp69, Asp96, and Asp118 together coordinate S-adenosyl-L-methionine. Asp118 is a catalytic residue. Lys122 is a binding site for substrate. Positions 124–129 (RHEKRR) are interaction with RNA. Residues Asp154 and 191 to 194 (TEYE) each bind substrate.

It belongs to the class I-like SAM-binding methyltransferase superfamily. TrmB family.

The catalysed reaction is guanosine(46) in tRNA + S-adenosyl-L-methionine = N(7)-methylguanosine(46) in tRNA + S-adenosyl-L-homocysteine. The protein operates within tRNA modification; N(7)-methylguanine-tRNA biosynthesis. In terms of biological role, catalyzes the formation of N(7)-methylguanine at position 46 (m7G46) in tRNA. This is tRNA (guanine-N(7)-)-methyltransferase from Streptococcus thermophilus (strain CNRZ 1066).